Reading from the N-terminus, the 374-residue chain is Zinc finger CCCH domain-containing protein 15 homolog (374 aa).

A disordered region spans residues 1–20 (MPPKQQGPSKKSEQKRKEKV). Residues 10–20 (KKSEQKRKEKV) are compositionally biased toward basic and acidic residues. 2 consecutive C3H1-type zinc fingers follow at residues 90 to 117 (DPKSLLCVFFKQGLCGKGAKCKFSHDLA) and 166 to 199 (VCKYFLEAVENNKYGWFWECPNGGEKCQYRHCLP).

The protein belongs to the ZC3H15/TMA46 family.

This is Zinc finger CCCH domain-containing protein 15 homolog from Caenorhabditis elegans.